The following is a 575-amino-acid chain: Serine/threonine-protein phosphatase 2A regulatory subunit B'' subunit beta (575 aa).

The disordered stretch occupies residues 41-131; that stretch reads APGRDQPTPG…SQSIPTFYFP (91 aa). An EF-hand domain is found at 388-423; that stretch reads KTPTSIEYWFRCMDLDGDGALSMFELEYFYEEQCRR. Ca(2+) is bound by residues D401, D403, D405, and E412.

As to quaternary structure, PP2A consists of a common heterodimeric core enzyme, composed of a 36 kDa catalytic subunit (subunit C) and a 65 kDa constant regulatory subunit (PR65 or subunit A), that associates with a variety of regulatory subunits. Proteins that associate with the core dimer include three families of regulatory subunits B (the R2/B/PR55/B55, R3/B''/PR72/PR130/PR59 and R5/B'/B56 families), the 48 kDa variable regulatory subunit, viral proteins, and cell signaling molecules. Interacts with N-terminal region of CDC6. Interacts with NOD2.

Its subcellular location is the nucleus. The B regulatory subunit might modulate substrate selectivity and catalytic activity, and might also direct the localization of the catalytic enzyme to a particular subcellular compartment. In Homo sapiens (Human), this protein is Serine/threonine-protein phosphatase 2A regulatory subunit B'' subunit beta (PPP2R3B).